The sequence spans 310 residues: Beta sliding clamp (310 aa).

It belongs to the beta sliding clamp family. As to quaternary structure, forms a ring-shaped head-to-tail homodimer around DNA which binds and tethers DNA polymerases and other proteins to the DNA. The DNA replisome complex has a single clamp-loading complex (3 tau and 1 each of delta, delta', psi and chi subunits) which binds 3 Pol III cores (1 core on the leading strand and 2 on the lagging strand) each with a beta sliding clamp dimer. Additional proteins in the replisome are other copies of gamma, psi and chi, Ssb, DNA helicase and RNA primase.

The protein localises to the cytoplasm. Confers DNA tethering and processivity to DNA polymerases and other proteins. Acts as a clamp, forming a ring around DNA (a reaction catalyzed by the clamp-loading complex) which diffuses in an ATP-independent manner freely and bidirectionally along dsDNA. Initially characterized for its ability to contact the catalytic subunit of DNA polymerase III (Pol III), a complex, multichain enzyme responsible for most of the replicative synthesis in bacteria; Pol III exhibits 3'-5' exonuclease proofreading activity. The beta chain is required for initiation of replication as well as for processivity of DNA replication. In Micrococcus luteus (Micrococcus lysodeikticus), this protein is Beta sliding clamp (dnaN).